The primary structure comprises 588 residues: MHSMISSVDVKSEVPMGLEPISPLDLRTDLRMMMPVVDPVVREKQLQQELLLIQQQQQIQKQLLIAEFQKQHENLTRQHQAQLQEHIKELLAIKQQQELLEKEQKLEQQRQEQEVERHRREQQLPPLRGKDRGRERAVASTEVKQKLQEFLLSKSATKDTPTNGKNHSVGRHPKLWYTAAHHTSLDQSSPPLSGTSPSYKYTLPGAQDSKDDFPLRKTASEPNLKVRSRLKQKVAERRSSPLLRRKDGNLVTSFKKRVFEVAESSVSSSSPGSGPSSPNNGPAGNVTENEASALPPTPHPEQLVPQQRILIHEDSMNLLSLYTSPSLPNITLGLPAVPSPLNASNSLKDKQKCETQMLRQGVPLPSQYGSSIAASSSHVHVAMEGKPNSSHQALLQHLLLKEQMRQQKLLVAGGVPLHPQSPLATKERISPGIRGTHKLPRHRPLNRTQSAPLPQSTLAQLVIQQQHQQFLEKQKQYQQQIHMNKLLSKSIEQLKQPGSHLEEAEEELQGDQSMEDRAASKDNSARSDSSACVEDTLGQVGAVKVKEEPVDSDEDAQIQEMECGEQAAFMQQVIGKDLAPGFVIKVII.

Serine 22 bears the Phosphoserine mark. An interaction with CTBP1 region spans residues 23-27 (PLDLR). The segment covering 110-147 (RQEQEVERHRREQQLPPLRGKDRGRERAVASTEVKQKL) has biased composition (basic and acidic residues). Disordered regions lie at residues 110–170 (RQEQ…HSVG), 183–242 (TSLD…SSPL), and 264–301 (SSVS…PHPE). Residues 136–154 (RAVASTEVKQKLQEFLLSK) are interaction with MEF2. Composition is skewed to polar residues over residues 154 to 166 (KSAT…NGKN) and 185 to 199 (LDQS…SPSY). The interaction with MAPK10 stretch occupies residues 175-343 (LWYTAAHHTS…LPAVPSPLNA (169 aa)). Over residues 208 to 219 (DSKDDFPLRKTA) the composition is skewed to basic and acidic residues. An interaction with ETV6 region spans residues 218-261 (TASEPNLKVRSRLKQKVAERRSSPLLRRKDGNLVTSFKKRVFEV). A Phosphoserine modification is found at serine 220. Over residues 233–242 (KVAERRSSPL) the composition is skewed to basic and acidic residues. Phosphoserine; by DYRK1B is present on serine 240. Over residues 264-284 (SSVSSSSPGSGPSSPNNGPAG) the composition is skewed to low complexity. Serine 450 bears the Phosphoserine mark. The segment at 493–533 (QLKQPGSHLEEAEEELQGDQSMEDRAASKDNSARSDSSACV) is disordered. A compositionally biased stretch (basic and acidic residues) spans 514–525 (MEDRAASKDNSA). Residue serine 552 is modified to Phosphoserine.

It belongs to the histone deacetylase family. HD type 2 subfamily. As to quaternary structure, homodimer. Interacts with ETV6. Interacts with MEF2, HDAC1, HDAC3, HDAC4, HDAC5, CTBP1 and MAPK10. The phosphorylated form interacts with 14-3-3. Interacts with FOXP3 in the absence of T-cell stimulation. Post-translationally, sumoylated. In terms of processing, phosphorylated on Ser-220 and Ser-450; which promotes 14-3-3-binding, impairs interaction with MEF2, and antagonizes antimyogenic activity. Phosphorylated on Ser-240 by DYRK1B; which impairs nuclear accumulation. Phosphorylated by the PKC kinases PKN1 and PKN2, impairing nuclear import. In terms of tissue distribution, expressed at high levels in heart, brain and spleen. Expressed in skeletal muscle.

The protein localises to the nucleus. It catalyses the reaction N(6)-acetyl-L-lysyl-[histone] + H2O = L-lysyl-[histone] + acetate. Its function is as follows. Devoided of intrinsic deacetylase activity, promotes the deacetylation of lysine residues on the N-terminal part of the core histones (H2A, H2B, H3 and H4) by recruiting HDAC1 and HDAC3. Histone deacetylation gives a tag for epigenetic repression and plays an important role in transcriptional regulation, cell cycle progression and developmental events. Represses MEF2-dependent transcription, inhibits skeletal myogenesis and may be involved in heart development. Protects neurons from apoptosis, both by inhibiting JUN phosphorylation by MAPK10 and by repressing JUN transcription via HDAC1 recruitment to JUN promoter. The polypeptide is Histone deacetylase 9 (Hdac9) (Mus musculus (Mouse)).